Reading from the N-terminus, the 75-residue chain is MARFYRRRKFCRFTAEGITHIDYKDVELLKQYISDNGKIVPSRITGTSNKYQRQLATAIKQARYLALLPYTDNHQ.

This sequence belongs to the bacterial ribosomal protein bS18 family. Part of the 30S ribosomal subunit. Forms a tight heterodimer with protein bS6.

Its function is as follows. Binds as a heterodimer with protein bS6 to the central domain of the 16S rRNA, where it helps stabilize the platform of the 30S subunit. The protein is Small ribosomal subunit protein bS18 of Psychrobacter sp. (strain PRwf-1).